The chain runs to 343 residues: uncharacterized protein (343 aa).

An ATP-binding site is contributed by 33 to 40 (GPKSSGKS).

It belongs to the archaeal ATPase family.

This is an uncharacterized protein from Methanocaldococcus jannaschii (strain ATCC 43067 / DSM 2661 / JAL-1 / JCM 10045 / NBRC 100440) (Methanococcus jannaschii).